A 550-amino-acid polypeptide reads, in one-letter code: Sterol O-acyltransferase 1 (550 aa).

An N-acetylmethionine modification is found at methionine 1. The tract at residues 1–36 is disordered; sequence MVGEEKMSLRNRLSKSRENPEEDEDQRKPAKESLEA. The Cytoplasmic segment spans residues 1–138; it reads MVGEEKMSLR…LDELLEVDHI (138 aa). A Phosphoserine modification is found at serine 8. Over residues 15–34 the composition is skewed to basic and acidic residues; it reads KSRENPEEDEDQRKPAKESL. Histidine 137 contacts cholesterol. The chain crosses the membrane as a helical span at residues 139–160; the sequence is RTIYHMFIALLILFILSTLVVD. Over 161–180 the chain is Lumenal; that stretch reads YIDEGRLVLEFSLLSYAFGK. Residues 181-206 form a helical membrane-spanning segment; it reads FPTVVWTWWIMFLSTFSVPYFLFQRW. The Cytoplasmic segment spans residues 207 to 218; that stretch reads ATGYSKSSHPLI. A helical membrane pass occupies residues 219-244; it reads NSLFHGFLFMVFQIGILGFGPTYVVL. The Lumenal portion of the chain corresponds to 245–252; it reads AYTLPPAS. A helical transmembrane segment spans residues 253–276; that stretch reads RFIIIFEQIRFVMKAHSFVRENVP. Topologically, residues 277 to 319 are cytoplasmic; that stretch reads RVLNSAKEKSSTVPIPTVNQYLYFLFAPTLIYRDSYPRNPTVR. A helical membrane pass occupies residues 320 to 352; that stretch reads WGYVAMQFAQVFGCFFYVYYIFERLCAPLFRNI. Residues 353 to 369 are Lumenal-facing; it reads KQEPFSARVLVLCVFNS. Residues 370 to 395 traverse the membrane as a helical segment; sequence ILPGVLILFLTFFAFLHCWLNAFAEM. The Cytoplasmic portion of the chain corresponds to 396–443; sequence LRFGDRMFYKDWWNSTSYSNYYRTWNVVVHDWLYYYAYKDFLWFFSKR. An FYXDWWN motif motif is present at residues 403 to 409; the sequence is FYKDWWN. Residues asparagine 415, arginine 418, asparagine 421, histidine 425, tyrosine 433, lysine 445, and serine 456 each coordinate an acyl-CoA. Residues 444–468 form a helical membrane-spanning segment; sequence FKSAAMLAVFAVSAVVHEYALAVCL. Histidine 460 is a catalytic residue. Over 469–474 the chain is Lumenal; sequence SFFYPV. A helical transmembrane segment spans residues 475 to 490; sequence LFVLFMFFGMAFNFIV. The Cytoplasmic segment spans residues 491–496; that stretch reads NDSRKK. A helical transmembrane segment spans residues 497–528; the sequence is PIWNVMMWTSLFLGNGVLLCFYSQEWYARQHC. Cysteine 528 and cysteine 546 form a disulfide bridge. Residues 529–550 lie on the Lumenal side of the membrane; that stretch reads PLKNPTFLDYVRPRSWTCRYVF.

The protein belongs to the membrane-bound acyltransferase family. Sterol o-acyltransferase subfamily. In terms of assembly, may form homo- or heterodimers. Interacts with UBIAD1. In terms of tissue distribution, expressed in most tissues, but most strongly in the adrenal gland. Expressed more strongly in liver Kupffer cells than in hepatocytes.

It is found in the endoplasmic reticulum membrane. The enzyme catalyses a sterol + a long-chain fatty acyl-CoA = a long-chain 3-hydroxysterol ester + CoA. The catalysed reaction is cholesterol + an acyl-CoA = a cholesterol ester + CoA. It catalyses the reaction cholesterol + (9Z)-octadecenoyl-CoA = cholesteryl (9Z-octadecenoate) + CoA. It carries out the reaction cholesterol + hexadecanoyl-CoA = cholesteryl hexadecanoate + CoA. The enzyme catalyses octadecanoyl-CoA + cholesterol = cholesteryl octadecanoate + CoA. The catalysed reaction is (9Z,12Z)-octadecadienoyl-CoA + cholesterol = cholesteryl (9Z,12Z)-octadecadienoate + CoA. It catalyses the reaction (5Z,8Z,11Z,14Z)-eicosatetraenoyl-CoA + cholesterol = cholesteryl (5Z,8Z,11Z,14Z)-eicosatetraenoate + CoA. It carries out the reaction (9Z)-hexadecenoyl-CoA + cholesterol = cholesteryl (9Z)-hexadecenoate + CoA. The enzyme catalyses (11Z)-octadecenoyl-CoA + cholesterol = cholesteryl (11Z)-octadecenoate + CoA. The catalysed reaction is (7Z)-octadecenoyl-CoA + cholesterol = cholesteryl (7Z)-octadecenoate + CoA. Its function is as follows. Catalyzes the formation of fatty acid-cholesterol esters, which are less soluble in membranes than cholesterol. Plays a role in lipoprotein assembly and dietary cholesterol absorption. Preferentially utilizes oleoyl-CoA ((9Z)-octadecenoyl-CoA) as a substrate: shows a higher activity towards an acyl-CoA substrate with a double bond at the delta-9 position (9Z) than towards saturated acyl-CoA or an unsaturated acyl-CoA with a double bond at the delta-7 (7Z) or delta-11 (11Z) positions. The protein is Sterol O-acyltransferase 1 (SOAT1) of Chlorocebus aethiops (Green monkey).